Here is a 467-residue protein sequence, read N- to C-terminus: ATP synthase subunit beta (467 aa).

157–164 (GGAGVGKT) serves as a coordination point for ATP.

Belongs to the ATPase alpha/beta chains family. In terms of assembly, F-type ATPases have 2 components, CF(1) - the catalytic core - and CF(0) - the membrane proton channel. CF(1) has five subunits: alpha(3), beta(3), gamma(1), delta(1), epsilon(1). CF(0) has three main subunits: a(1), b(2) and c(9-12). The alpha and beta chains form an alternating ring which encloses part of the gamma chain. CF(1) is attached to CF(0) by a central stalk formed by the gamma and epsilon chains, while a peripheral stalk is formed by the delta and b chains.

It localises to the cell inner membrane. The catalysed reaction is ATP + H2O + 4 H(+)(in) = ADP + phosphate + 5 H(+)(out). Functionally, produces ATP from ADP in the presence of a proton gradient across the membrane. The catalytic sites are hosted primarily by the beta subunits. This is ATP synthase subunit beta from Desulfosudis oleivorans (strain DSM 6200 / JCM 39069 / Hxd3) (Desulfococcus oleovorans).